A 404-amino-acid polypeptide reads, in one-letter code: Glucose-1-phosphate adenylyltransferase (404 aa).

Alpha-D-glucose 1-phosphate contacts are provided by residues tyrosine 99, glycine 164, 179 to 180 (EK), and serine 197.

This sequence belongs to the bacterial/plant glucose-1-phosphate adenylyltransferase family.

It carries out the reaction alpha-D-glucose 1-phosphate + ATP + H(+) = ADP-alpha-D-glucose + diphosphate. It participates in glycan biosynthesis; glycogen biosynthesis. Involved in the biosynthesis of ADP-glucose, a building block, required in the biosynthesis of maltose-1-phosphate (M1P) and in the elongation reactions to produce linear alpha-1,4-glucans. Catalyzes the reaction between ATP and alpha-D-glucose 1-phosphate (G1P) to produce pyrophosphate and ADP-Glc. The sequence is that of Glucose-1-phosphate adenylyltransferase from Mycolicibacterium vanbaalenii (strain DSM 7251 / JCM 13017 / BCRC 16820 / KCTC 9966 / NRRL B-24157 / PYR-1) (Mycobacterium vanbaalenii).